The sequence spans 158 residues: Mitotic-spindle organizing protein 2A (158 aa).

The residue at position 34 (serine 34) is a Phosphoserine. Positions 84-158 (RLASEPQDPA…PGKSPTQGST (75 aa)) are disordered. Positions 112-122 (SAALGGVLALA) are enriched in low complexity. Over residues 128–140 (EGSSQRMPRQPSA) the composition is skewed to polar residues. Serine 152 is modified (phosphoserine).

It belongs to the MOZART2 family. As to quaternary structure, associates with the gamma-tubulin ring complex (gTuRC) consisting of TUBGCP2, TUBGCP3, TUBGCP4, TUBGCP5 and TUBGCP6 and gamma-tubulin TUBG1 or TUBG2; within the complex, interacts with TUBGCP2; the interaction plays a role in gTuRC activation.

It is found in the cytoplasm. Its subcellular location is the cytoskeleton. It localises to the microtubule organizing center. The protein localises to the centrosome. The protein resides in the spindle. In terms of biological role, required for the recruitment and the assembly of the gamma-tubulin ring complex (gTuRC) at the centrosome. The gTuRC regulates the minus-end nucleation of alpha-beta tubulin heterodimers that grow into microtubule protafilaments, a critical step in centrosome duplication and spindle formation. This Homo sapiens (Human) protein is Mitotic-spindle organizing protein 2A (MZT2A).